The following is a 263-amino-acid chain: uncharacterized protein (263 aa).

An ATP-binding site is contributed by 31 to 38 (GPTGSGKT).

This sequence belongs to the CbbQ/NirQ/NorQ/GpvN family.

This is an uncharacterized protein from Staphylococcus aureus (strain bovine RF122 / ET3-1).